The primary structure comprises 293 residues: MAITAQQVKELREKTGAGMMDCKKALTETDGDMDKAIDLLREKGIAKAAKKADRIAAEGSTLIKTDGNKGVILEVNSETDFVAKNEGFKELLNTLADHLLANTPADVEEAMGQKMENGSTVEEYITSAVAKIGEKITLRRFTVLTKDDSSAFGAYLHMGGRIGVLTVLNGTTDEETAKDIAMHVAAVNPRYISRDQVSEEETNHERQILTQQALQEGKPENIVAKMVEGRLNKFFEEICLLDQAFVKNPDEKVKQVIAAKNATVQTFVRYEVGEGIEKRQENFAEEVMNQVKK.

Positions 79-82 are involved in Mg(2+) ion dislocation from EF-Tu; it reads TDFV. Position 149 is a phosphoserine (Ser149).

This sequence belongs to the EF-Ts family.

It is found in the cytoplasm. Associates with the EF-Tu.GDP complex and induces the exchange of GDP to GTP. It remains bound to the aminoacyl-tRNA.EF-Tu.GTP complex up to the GTP hydrolysis stage on the ribosome. The sequence is that of Elongation factor Ts (tsf) from Bacillus subtilis (strain 168).